Reading from the N-terminus, the 175-residue chain is uncharacterized protein (175 aa).

Disordered regions lie at residues 1 to 32 (MSHK…KLRH) and 156 to 175 (KQKQ…KYRQ). Low complexity predominate over residues 14–24 (LLSSSSPVAKK).

This is an uncharacterized protein from Mycoplasma pneumoniae (strain ATCC 29342 / M129 / Subtype 1) (Mycoplasmoides pneumoniae).